We begin with the raw amino-acid sequence, 784 residues long: Probable phosphoketolase (784 aa).

It belongs to the XFP family. Thiamine diphosphate serves as cofactor.

The chain is Probable phosphoketolase from Rhodopseudomonas palustris (strain BisB5).